A 311-amino-acid polypeptide reads, in one-letter code: Dehydrogenase/reductase SDR family member 7C (311 aa).

Residues 1 to 18 (MGFLTFLIVPLLILGISG) form the signal peptide. 41–65 (VITDAISGLGKECSRVFHSAGARLV) contributes to the NAD(+) binding site. Residue Thr-178 participates in substrate binding. The active-site Proton acceptor is Tyr-191.

The protein belongs to the short-chain dehydrogenases/reductases (SDR) family.

It is found in the secreted. Putative oxidoreductase. The sequence is that of Dehydrogenase/reductase SDR family member 7C (dhrs7c) from Xenopus tropicalis (Western clawed frog).